Consider the following 642-residue polypeptide: Threonine--tRNA ligase (642 aa).

Residues 1-61 (MPVITLPDGS…DTDSELSIIT (61 aa)) enclose the TGS domain. Residues 243-534 (DHRKIGKQLD…LIEEYAGKFP (292 aa)) form a catalytic region. Residues Cys334, His385, and His511 each contribute to the Zn(2+) site.

Belongs to the class-II aminoacyl-tRNA synthetase family. Homodimer. It depends on Zn(2+) as a cofactor.

It localises to the cytoplasm. The enzyme catalyses tRNA(Thr) + L-threonine + ATP = L-threonyl-tRNA(Thr) + AMP + diphosphate + H(+). Its function is as follows. Catalyzes the attachment of threonine to tRNA(Thr) in a two-step reaction: L-threonine is first activated by ATP to form Thr-AMP and then transferred to the acceptor end of tRNA(Thr). Also edits incorrectly charged L-seryl-tRNA(Thr). This chain is Threonine--tRNA ligase, found in Shewanella sediminis (strain HAW-EB3).